A 431-amino-acid polypeptide reads, in one-letter code: MRSYERSKAAYAEAVKLMPGGVNSPVRAFKAVKMDPIFMARGKGSKIYDIDGNEYIDYVLSWGPLILGHANDQVVEALKRVAETGTSFGAPTLIENELAKLVMERMPSIEIIRMVSSGTEATMSALRLARGYTGRNKIVKFEGCYHGHGDSLLIKAGSGVATLGLPDSPGVPETVAQHTITVPYNDLQSVRYAFEKFGEDIAAVIVEPVAGNMGVVPPEPGFLQGLRDVTNEYGALLIFDEVMTGFRVDYYSGQGYYGVTPDLTCLGKVIGGGLPVGAYGGRADIMEKIAPSGPIYQAGTLSGNPMAMTAGYETLRQLTPETYEAFKKKANRLAEGLSEAAKAYHIPHTINQAGSMIGMFFTNERVTNYETAKTSNLDLFARYYQEMANEGIFLPPSQFEGMFLSTAHTDEDIEKTIEAARRAFAKMSDCL.

K268 carries the post-translational modification N6-(pyridoxal phosphate)lysine.

This sequence belongs to the class-III pyridoxal-phosphate-dependent aminotransferase family. HemL subfamily. Homodimer. The cofactor is pyridoxal 5'-phosphate.

The protein localises to the cytoplasm. The catalysed reaction is (S)-4-amino-5-oxopentanoate = 5-aminolevulinate. It functions in the pathway porphyrin-containing compound metabolism; protoporphyrin-IX biosynthesis; 5-aminolevulinate from L-glutamyl-tRNA(Glu): step 2/2. The protein is Glutamate-1-semialdehyde 2,1-aminomutase 2 of Anoxybacillus flavithermus (strain DSM 21510 / WK1).